A 683-amino-acid polypeptide reads, in one-letter code: Inositol-trisphosphate 3-kinase C (683 aa).

Residues 1 to 124 (MRRCPCRGSL…PDRSSLRTHL (124 aa)) are disordered. A compositionally biased stretch (low complexity) spans 13–22 (AEAGALPAAA). Positions 44–58 (PGAGAPAGRPEGGGP) are enriched in gly residues. Positions 105–124 (ETERPKQKTEPDRSSLRTHL) are enriched in basic and acidic residues. Phosphoserine is present on residues Ser-127 and Ser-162. Residues 147-308 (TDPHRSDLQF…EDGPLEEPEP (162 aa)) are disordered. Polar residues predominate over residues 196–206 (WTHQNSSSLQT). A compositionally biased stretch (basic and acidic residues) spans 249 to 259 (SQKKQDTEAAR). Over residues 267–289 (FQIQQDTDGSWTQPSTDGSQTAP) the composition is skewed to polar residues. The segment covering 297–308 (EPEDGPLEEPEP) has biased composition (acidic residues). Residues 324–332 (LCPVPRLII) carry the Nuclear export signal motif. The segment at 334–387 (PETPEPEAQPVGPPSRVEGGSGGFSSASSFDESEDDVVAGGGGASDPEDRSGSK) is disordered. A Phosphothreonine modification is found at Thr-336. Ser-404 carries the post-translational modification Phosphoserine. ATP-binding positions include Lys-431, 471–473 (EDL), and Asp-484. Residues Lys-486, 507–513 (RKDMYEK), and 534–541 (KPRYMQWR) each bind substrate. The calmodulin-binding stretch occupies residues 509 to 517 (DMYEKMVAV). ATP contacts are provided by Lys-558 and Asp-638. Position 641 (Lys-641) interacts with substrate.

This sequence belongs to the inositol phosphokinase (IPK) family. As to expression, highly expressed in pancreas, skeletal muscle, liver, placenta and weakly in kidney and brain.

It is found in the nucleus. It localises to the cytoplasm. It carries out the reaction 1D-myo-inositol 1,4,5-trisphosphate + ATP = 1D-myo-inositol 1,3,4,5-tetrakisphosphate + ADP + H(+). With respect to regulation, activated by calcium/calmodulin. Inhibited by high concentrations of the substrate Ins(1,2,4)P3, and allosterically activated by the product Ins(1,3,4,5)P4. In terms of biological role, catalyzes the phosphorylation of 1D-myo-inositol 1,4,5-trisphosphate (InsP3) into 1D-myo-inositol 1,3,4,5-tetrakisphosphate and participates to the regulation of calcium homeostasis. Can phosphorylate inositol 2,4,5-triphosphate to inositol 2,4,5,6-tetraphosphate. This chain is Inositol-trisphosphate 3-kinase C, found in Homo sapiens (Human).